A 69-amino-acid chain; its full sequence is Large ribosomal subunit protein bL31 (69 aa).

Residues C16, C18, C38, and C41 each contribute to the Zn(2+) site.

The protein belongs to the bacterial ribosomal protein bL31 family. Type A subfamily. In terms of assembly, part of the 50S ribosomal subunit. Requires Zn(2+) as cofactor.

Binds the 23S rRNA. This chain is Large ribosomal subunit protein bL31, found in Cutibacterium acnes (strain DSM 16379 / KPA171202) (Propionibacterium acnes).